The chain runs to 458 residues: Argininosuccinate lyase (458 aa).

Belongs to the lyase 1 family. Argininosuccinate lyase subfamily.

It localises to the cytoplasm. The enzyme catalyses 2-(N(omega)-L-arginino)succinate = fumarate + L-arginine. Its pathway is amino-acid biosynthesis; L-arginine biosynthesis; L-arginine from L-ornithine and carbamoyl phosphate: step 3/3. The protein is Argininosuccinate lyase of Neisseria gonorrhoeae (strain ATCC 700825 / FA 1090).